Reading from the N-terminus, the 172-residue chain is Orotate phosphoribosyltransferase (172 aa).

Residues Arg-88, Lys-89, Lys-92, His-94, and 113-121 contribute to the 5-phospho-alpha-D-ribose 1-diphosphate site; that span reads EDVTTSGGS. Residues Thr-117 and Arg-145 each contribute to the orotate site.

The protein belongs to the purine/pyrimidine phosphoribosyltransferase family. PyrE subfamily. In terms of assembly, homodimer. Mg(2+) is required as a cofactor.

The catalysed reaction is orotidine 5'-phosphate + diphosphate = orotate + 5-phospho-alpha-D-ribose 1-diphosphate. The protein operates within pyrimidine metabolism; UMP biosynthesis via de novo pathway; UMP from orotate: step 1/2. In terms of biological role, catalyzes the transfer of a ribosyl phosphate group from 5-phosphoribose 1-diphosphate to orotate, leading to the formation of orotidine monophosphate (OMP). The sequence is that of Orotate phosphoribosyltransferase from Methanospirillum hungatei JF-1 (strain ATCC 27890 / DSM 864 / NBRC 100397 / JF-1).